Here is a 315-residue protein sequence, read N- to C-terminus: Acetyl-coenzyme A carboxylase carboxyl transferase subunit alpha (315 aa).

Residues 40-293 (LQDKSKTLTE…REELSSQLAM (254 aa)) enclose the CoA carboxyltransferase C-terminal domain.

It belongs to the AccA family. In terms of assembly, acetyl-CoA carboxylase is a heterohexamer composed of biotin carboxyl carrier protein (AccB), biotin carboxylase (AccC) and two subunits each of ACCase subunit alpha (AccA) and ACCase subunit beta (AccD).

Its subcellular location is the cytoplasm. It catalyses the reaction N(6)-carboxybiotinyl-L-lysyl-[protein] + acetyl-CoA = N(6)-biotinyl-L-lysyl-[protein] + malonyl-CoA. The protein operates within lipid metabolism; malonyl-CoA biosynthesis; malonyl-CoA from acetyl-CoA: step 1/1. Component of the acetyl coenzyme A carboxylase (ACC) complex. First, biotin carboxylase catalyzes the carboxylation of biotin on its carrier protein (BCCP) and then the CO(2) group is transferred by the carboxyltransferase to acetyl-CoA to form malonyl-CoA. This is Acetyl-coenzyme A carboxylase carboxyl transferase subunit alpha from Pseudomonas syringae pv. tomato (strain ATCC BAA-871 / DC3000).